The chain runs to 219 residues: Proteasome subunit beta type-9 (219 aa).

A propeptide spans 1–20 (MLRAGAPTAGSFRTEEVHTG) (removed in mature form). The active-site Nucleophile is Thr-21. N6-acetyllysine is present on residues Lys-53 and Lys-109.

Belongs to the peptidase T1B family. The 26S proteasome consists of a 20S proteasome core and two 19S regulatory subunits. The 20S proteasome core is composed of 28 subunits that are arranged in four stacked rings, resulting in a barrel-shaped structure. The two end rings are each formed by seven alpha subunits, and the two central rings are each formed by seven beta subunits. The catalytic chamber with the active sites is on the inside of the barrel. Component of the immunoproteasome, where it displaces the equivalent housekeeping subunit PSMB6. Component of the spermatoproteasome, a form of the proteasome specifically found in testis. Post-translationally, autocleaved. The resulting N-terminal Thr residue of the mature subunit is responsible for the nucleophile proteolytic activity.

Its subcellular location is the cytoplasm. It is found in the nucleus. It carries out the reaction Cleavage of peptide bonds with very broad specificity.. The proteasome is a multicatalytic proteinase complex which is characterized by its ability to cleave peptides with Arg, Phe, Tyr, Leu, and Glu adjacent to the leaving group at neutral or slightly basic pH. The proteasome has an ATP-dependent proteolytic activity. This subunit is involved in antigen processing to generate class I binding peptides. The sequence is that of Proteasome subunit beta type-9 (Psmb9) from Mus musculus bactrianus (Southwestern Asian house mouse).